The sequence spans 1267 residues: BOS complex subunit NOMO2 (1267 aa).

Residues 1 to 31 (MLVGQGAGLLGPAVVTAAVVLLLSGVGPAHG) form the signal peptide. Over 32–1155 (SEDIVVGCGG…NPTRKLPEQD (1124 aa)) the chain is Lumenal. N-linked (GlcNAc...) asparagine glycans are attached at residues Asn50, Asn218, and Asn618. The chain crosses the membrane as a helical span at residues 1156–1176 (IAQGSYIALPLTLLVLLAGYN). Residues 1177 to 1267 (HDKLIPLLLQ…LETTATCIHY (91 aa)) lie on the Cytoplasmic side of the membrane. The interval 1198 to 1219 (GQAASDNSGPEDAKRQAKKQKT) is disordered.

In terms of assembly, component of the back of Sec61 (BOS) complex, composed of NCLN/Nicalin, NOMO (NOMO1, NOMO2 or NOMO3) and TMEM147. The BOS complex is part of the multi-pass translocon (MPT) complex, composed of three subcomplexes, the GEL complex (composed of RAB5IF/OPTI and TMCO1), the BOS complex (composed of NCLN/Nicalin, NOMO and TMEM147) and the PAT complex (composed of WDR83OS/Asterix and CCDC47). The MPT complex associates with the SEC61 complex. Due to the strong similarity between NOMO1, NOMO2 and NOMO3, similar interaction pattern probably occur for the three gene copies. Highly expressed in pancreas and skeletal muscle and, at lower levels, in heart.

The protein resides in the endoplasmic reticulum membrane. In terms of biological role, component of the multi-pass translocon (MPT) complex that mediates insertion of multi-pass membrane proteins into the lipid bilayer of membranes. The MPT complex takes over after the SEC61 complex: following membrane insertion of the first few transmembrane segments of proteins by the SEC61 complex, the MPT complex occludes the lateral gate of the SEC61 complex to promote insertion of subsequent transmembrane regions. The polypeptide is BOS complex subunit NOMO2 (NOMO2) (Homo sapiens (Human)).